The primary structure comprises 280 residues: Bis(5'-nucleosyl)-tetraphosphatase, symmetrical (280 aa).

It belongs to the Ap4A hydrolase family.

The enzyme catalyses P(1),P(4)-bis(5'-adenosyl) tetraphosphate + H2O = 2 ADP + 2 H(+). In terms of biological role, hydrolyzes diadenosine 5',5'''-P1,P4-tetraphosphate to yield ADP. The chain is Bis(5'-nucleosyl)-tetraphosphatase, symmetrical from Paracidovorax citrulli (strain AAC00-1) (Acidovorax citrulli).